Here is a 484-residue protein sequence, read N- to C-terminus: MANKIRVRYAPSPTGLLHIGNARTALFNYLYARHHGGDFVIRIEDTDRKRHVEDGERSQLENLRWLGMDWDESPETHENYRQSERLELYQRYIDQLLAEGKAYKSYVTEEELAAERERQELAGETPRYINEFIGMSETEKEAYIAEREAAGIIPTVRLAVNESGIYKWTDMVKGDIEFEGSNIGGDWVIQKKDGYPTYNFAVVIDDHDMQISHVIRGDDHIANTPKQLMVYEALGWEAPQFGHMTLIINSETGKKLSKRDTNTLQFIEDYRKKGYMSEAVFNFIALLGWNPGGEEEIFSREQLINLFDENRLSKSPAAFDQKKMDWMSNDYLKNADFESVFALCKPFLEEAGRLTDKAEKLVELYQPQLKSADEIVPLTDLFFADFPELTEAEKEVMAAETVPTVLSAFKEKLVSLSDEEFTRDTIFPQIKAVQKETGIKGKNLFMPIRIAVSGEMHGPELPDTIYLLGKEKSVQHIDNMLAKL.

The 'HIGH' region motif lies at 11–21 (PSPTGLLHIGN). The short motif at 255 to 259 (KLSKR) is the 'KMSKS' region element. Lys258 is an ATP binding site.

Belongs to the class-I aminoacyl-tRNA synthetase family. Glutamate--tRNA ligase type 1 subfamily. As to quaternary structure, monomer.

Its subcellular location is the cytoplasm. The enzyme catalyses tRNA(Glu) + L-glutamate + ATP = L-glutamyl-tRNA(Glu) + AMP + diphosphate. Functionally, catalyzes the attachment of glutamate to tRNA(Glu) in a two-step reaction: glutamate is first activated by ATP to form Glu-AMP and then transferred to the acceptor end of tRNA(Glu). This is Glutamate--tRNA ligase from Streptococcus agalactiae serotype V (strain ATCC BAA-611 / 2603 V/R).